Consider the following 340-residue polypeptide: 4-hydroxy-3-methylbut-2-enyl diphosphate reductase (340 aa).

Cysteine 21 is a binding site for [4Fe-4S] cluster. The (2E)-4-hydroxy-3-methylbut-2-enyl diphosphate site is built by histidine 50 and histidine 83. Residues histidine 50 and histidine 83 each contribute to the dimethylallyl diphosphate site. Isopentenyl diphosphate is bound by residues histidine 50 and histidine 83. [4Fe-4S] cluster is bound at residue cysteine 105. A (2E)-4-hydroxy-3-methylbut-2-enyl diphosphate-binding site is contributed by histidine 133. A dimethylallyl diphosphate-binding site is contributed by histidine 133. Histidine 133 provides a ligand contact to isopentenyl diphosphate. The active-site Proton donor is glutamate 135. Threonine 173 serves as a coordination point for (2E)-4-hydroxy-3-methylbut-2-enyl diphosphate. Cysteine 203 lines the [4Fe-4S] cluster pocket. Positions 231, 232, 233, and 276 each coordinate (2E)-4-hydroxy-3-methylbut-2-enyl diphosphate. 4 residues coordinate dimethylallyl diphosphate: serine 231, serine 232, asparagine 233, and serine 276. The isopentenyl diphosphate site is built by serine 231, serine 232, asparagine 233, and serine 276. The tract at residues 320-340 (KARGEPLTRSATAGDRMNADR) is disordered.

Belongs to the IspH family. The cofactor is [4Fe-4S] cluster.

The catalysed reaction is isopentenyl diphosphate + 2 oxidized [2Fe-2S]-[ferredoxin] + H2O = (2E)-4-hydroxy-3-methylbut-2-enyl diphosphate + 2 reduced [2Fe-2S]-[ferredoxin] + 2 H(+). The enzyme catalyses dimethylallyl diphosphate + 2 oxidized [2Fe-2S]-[ferredoxin] + H2O = (2E)-4-hydroxy-3-methylbut-2-enyl diphosphate + 2 reduced [2Fe-2S]-[ferredoxin] + 2 H(+). It functions in the pathway isoprenoid biosynthesis; dimethylallyl diphosphate biosynthesis; dimethylallyl diphosphate from (2E)-4-hydroxy-3-methylbutenyl diphosphate: step 1/1. The protein operates within isoprenoid biosynthesis; isopentenyl diphosphate biosynthesis via DXP pathway; isopentenyl diphosphate from 1-deoxy-D-xylulose 5-phosphate: step 6/6. Functionally, catalyzes the conversion of 1-hydroxy-2-methyl-2-(E)-butenyl 4-diphosphate (HMBPP) into a mixture of isopentenyl diphosphate (IPP) and dimethylallyl diphosphate (DMAPP). Acts in the terminal step of the DOXP/MEP pathway for isoprenoid precursor biosynthesis. This Acidothermus cellulolyticus (strain ATCC 43068 / DSM 8971 / 11B) protein is 4-hydroxy-3-methylbut-2-enyl diphosphate reductase.